The primary structure comprises 430 residues: Serine hydroxymethyltransferase (430 aa).

120 to 122 is a (6S)-5,6,7,8-tetrahydrofolate binding site; sequence GHI. Lysine 226 carries the post-translational modification N6-(pyridoxal phosphate)lysine.

Belongs to the SHMT family. As to quaternary structure, homodimer. Requires pyridoxal 5'-phosphate as cofactor.

It is found in the cytoplasm. It participates in amino-acid biosynthesis; glycine biosynthesis; glycine from L-serine: step 1/1. In terms of biological role, catalyzes the reversible interconversion of serine and glycine with a modified folate serving as the one-carbon carrier. Also exhibits a pteridine-independent aldolase activity toward beta-hydroxyamino acids, producing glycine and aldehydes, via a retro-aldol mechanism. The chain is Serine hydroxymethyltransferase from Pyrobaculum islandicum (strain DSM 4184 / JCM 9189 / GEO3).